The chain runs to 758 residues: 5-methyltetrahydropteroyltriglutamate--homocysteine methyltransferase (758 aa).

Residues 17–20 and K117 contribute to the 5-methyltetrahydropteroyltri-L-glutamate site; that span reads RELK. Residues 434–436 and E487 contribute to the L-homocysteine site; that span reads IGS. Residues 434-436 and E487 each bind L-methionine; that span reads IGS. Residues 518-519 and W564 each bind 5-methyltetrahydropteroyltri-L-glutamate; that span reads RC. D602 serves as a coordination point for L-homocysteine. An L-methionine-binding site is contributed by D602. A 5-methyltetrahydropteroyltri-L-glutamate-binding site is contributed by E608. The Zn(2+) site is built by H644, C646, and E668. H697 (proton donor) is an active-site residue. C729 is a binding site for Zn(2+).

Belongs to the vitamin-B12 independent methionine synthase family. Zn(2+) is required as a cofactor.

It carries out the reaction 5-methyltetrahydropteroyltri-L-glutamate + L-homocysteine = tetrahydropteroyltri-L-glutamate + L-methionine. Its pathway is amino-acid biosynthesis; L-methionine biosynthesis via de novo pathway; L-methionine from L-homocysteine (MetE route): step 1/1. Functionally, catalyzes the transfer of a methyl group from 5-methyltetrahydrofolate to homocysteine resulting in methionine formation. The polypeptide is 5-methyltetrahydropteroyltriglutamate--homocysteine methyltransferase (Yersinia pestis (strain Pestoides F)).